A 445-amino-acid chain; its full sequence is Tubulin beta-2A chain (445 aa).

The MREI motif motif lies at 1–4 (MREI). Gln-11 contributes to the GTP binding site. Residue Ser-40 is modified to Phosphoserine. At Lys-58 the chain carries N6-acetyllysine; alternate. Lys-58 is subject to N6-succinyllysine; alternate. Lys-58 participates in a covalent cross-link: Glycyl lysine isopeptide (Lys-Gly) (interchain with G-Cter in ubiquitin); alternate. GTP-binding residues include Glu-69, Ser-138, Gly-142, Thr-143, and Gly-144. Residue Glu-69 coordinates Mg(2+). Phosphoserine; by CDK1 is present on Ser-172. 2 residues coordinate GTP: Asn-204 and Asn-226. A phosphothreonine mark is found at Thr-285 and Thr-290. Position 318 is an omega-N-methylarginine (Arg-318). Lys-324 participates in a covalent cross-link: Glycyl lysine isopeptide (Lys-Gly) (interchain with G-Cter in ubiquitin). Positions 422 to 445 (YQQYQDATADEQGEFEEEEGEDEA) are disordered. The span at 429 to 445 (TADEQGEFEEEEGEDEA) shows a compositional bias: acidic residues. A 5-glutamyl polyglutamate modification is found at Glu-438.

It belongs to the tubulin family. As to quaternary structure, interacts with ZNRF1. Part of a complex composed at least of ASH2L, EMSY, HCFC1, HSPA8, CCAR2, MATR3, MKI67, RBBP5, TUBB2A, WDR5 and ZNF335; this complex may have a histone H3-specific methyltransferase activity. Dimer of alpha and beta chains. A typical microtubule is a hollow water-filled tube with an outer diameter of 25 nm and an inner diameter of 15 nM. Alpha-beta heterodimers associate head-to-tail to form protofilaments running lengthwise along the microtubule wall with the beta-tubulin subunit facing the microtubule plus end conferring a structural polarity. Microtubules usually have 13 protofilaments but different protofilament numbers can be found in some organisms and specialized cells. The cofactor is Mg(2+). Post-translationally, some glutamate residues at the C-terminus are polyglutamylated, resulting in polyglutamate chains on the gamma-carboxyl group. Polyglutamylation plays a key role in microtubule severing by spastin (SPAST). SPAST preferentially recognizes and acts on microtubules decorated with short polyglutamate tails: severing activity by SPAST increases as the number of glutamates per tubulin rises from one to eight, but decreases beyond this glutamylation threshold. Glutamylation is also involved in cilia motility. Some glutamate residues at the C-terminus are monoglycylated but not polyglycylated due to the absence of functional TTLL10 in human. Monoglycylation is mainly limited to tubulin incorporated into cilia and flagella axonemes, which is required for their stability and maintenance. Flagella glycylation controls sperm motility. Both polyglutamylation and monoglycylation can coexist on the same protein on adjacent residues, and lowering glycylation levels increases polyglutamylation, and reciprocally. In terms of processing, phosphorylated on Ser-172 by CDK1 during the cell cycle, from metaphase to telophase, but not in interphase. This phosphorylation inhibits tubulin incorporation into microtubules. High expression in brain, where it represents 30% of all beta-tubulins.

Its subcellular location is the cytoplasm. The protein localises to the cytoskeleton. In terms of biological role, tubulin is the major constituent of microtubules, a cylinder consisting of laterally associated linear protofilaments composed of alpha- and beta-tubulin heterodimers. Microtubules grow by the addition of GTP-tubulin dimers to the microtubule end, where a stabilizing cap forms. Below the cap, tubulin dimers are in GDP-bound state, owing to GTPase activity of alpha-tubulin. This Homo sapiens (Human) protein is Tubulin beta-2A chain (TUBB2A).